A 671-amino-acid chain; its full sequence is DNA ligase (671 aa).

NAD(+) contacts are provided by residues 32–36, 81–82, and Glu-114; these read DVEYD and SL. Catalysis depends on Lys-116, which acts as the N6-AMP-lysine intermediate. 4 residues coordinate NAD(+): Arg-137, Glu-175, Lys-292, and Lys-316. 4 residues coordinate Zn(2+): Cys-410, Cys-413, Cys-428, and Cys-434. Residues 592-671 form the BRCT domain; that stretch reads EKNNYFSGKN…AEFYQILGIR (80 aa).

It belongs to the NAD-dependent DNA ligase family. LigA subfamily. It depends on Mg(2+) as a cofactor. Mn(2+) serves as cofactor.

The enzyme catalyses NAD(+) + (deoxyribonucleotide)n-3'-hydroxyl + 5'-phospho-(deoxyribonucleotide)m = (deoxyribonucleotide)n+m + AMP + beta-nicotinamide D-nucleotide.. Its function is as follows. DNA ligase that catalyzes the formation of phosphodiester linkages between 5'-phosphoryl and 3'-hydroxyl groups in double-stranded DNA using NAD as a coenzyme and as the energy source for the reaction. It is essential for DNA replication and repair of damaged DNA. The sequence is that of DNA ligase from Baumannia cicadellinicola subsp. Homalodisca coagulata.